We begin with the raw amino-acid sequence, 508 residues long: MLO-like protein 3 (508 aa).

The Extracellular segment spans residues Met1–Glu21. Residues Thr22–Glu42 form a helical membrane-spanning segment. Residues Arg43 to Lys68 are Cytoplasmic-facing. A helical membrane pass occupies residues Ser69–Ser89. Residues Lys90 to Tyr153 are Extracellular-facing. Residues Phe154–Met174 form a helical membrane-spanning segment. At Ala175–Lys275 the chain is on the cytoplasmic side. The chain crosses the membrane as a helical span at residues Thr276 to Val296. At Ser297–Tyr304 the chain is on the extracellular side. A helical transmembrane segment spans residues Met305–Ala325. Residues Lys326–Arg357 lie on the Cytoplasmic side of the membrane. Residues Phe358–Val378 traverse the membrane as a helical segment. At Trp379–Leu401 the chain is on the extracellular side. A helical membrane pass occupies residues Val402–Val422. The Cytoplasmic portion of the chain corresponds to Thr423–Arg508. A calmodulin-binding region spans residues Glu436–Gln457. Residues Lys453–Arg492 form a disordered region. Phosphoserine is present on Ser494.

The protein belongs to the MLO family.

The protein localises to the membrane. Its function is as follows. May be involved in modulation of pathogen defense and leaf cell death. Activity seems to be regulated by Ca(2+)-dependent calmodulin binding and seems not to require heterotrimeric G proteins. The sequence is that of MLO-like protein 3 (MLO3) from Arabidopsis thaliana (Mouse-ear cress).